The sequence spans 60 residues: Metallothionein (60 aa).

The tract at residues 1–28 is beta; it reads MDPCECSKTGKCSCGGSCTCTNCSCTSC. A divalent metal cation is bound by residues Cys4, Cys6, Cys12, Cys14, Cys18, Cys20, Cys23, Cys25, Cys28, Cys32, Cys33, Cys35, Cys36, Cys40, Cys43, Cys47, Cys49, Cys54, Cys58, and Cys59. Positions 29-60 are alpha; it reads KKSCCPCCPSGCSKCASGCVCKGKTCDTSCCQ.

It belongs to the metallothionein superfamily. Type 1 family.

In terms of biological role, metallothioneins have a high content of cysteine residues that bind various heavy metals. The polypeptide is Metallothionein (mt) (Chelon auratus (Golden grey mullet)).